The sequence spans 572 residues: Mitochondrial chaperone TCM62 (572 aa).

The N-terminal 16 residues, Met1–Cys16, are a transit peptide targeting the mitochondrion. The Mitochondrial matrix segment spans residues Ser17–Lys471. A helical transmembrane segment spans residues Val472–Ala488. Topologically, residues Phe489–Ala572 are mitochondrial intermembrane.

This sequence belongs to the chaperonin (HSP60) family. As to quaternary structure, forms a high molecular mass protein complex of approximately 850 kDa.

Its subcellular location is the mitochondrion inner membrane. Chaperone. Required for the assembly of succinate dehydrogenase subunits. Ensures mitochondrial gene expression at elevated temperatures and prevents heat-aggregation of the ribosomal subunit VAR1. In Saccharomyces cerevisiae (strain YJM789) (Baker's yeast), this protein is Mitochondrial chaperone TCM62 (TCM62).